We begin with the raw amino-acid sequence, 368 residues long: UV excision repair protein rhp23 (368 aa).

The region spanning 1–77 (MNLTFKNLQQ…IVCMVSRPKT (77 aa)) is the Ubiquitin-like domain. Composition is skewed to low complexity over residues 76–88 (KTST…AASP) and 103–124 (APSS…AAPS). Residues 76–134 (KTSTSTPKSAASPAPNPPASVPEKKVEAPSSTVAESTSTTQTVAAAAPSNPDTTATSEA) are disordered. Phosphoserine occurs at positions 84 and 87. 2 consecutive UBA domains span residues 135-185 (PIDA…LLTG) and 320-360 (QEES…LFEH). At Ser-364 the chain carries Phosphoserine.

Its subcellular location is the nucleus. In terms of biological role, involved in postreplication repair of UV-damaged DNA. Postreplication repair functions in gap-filling of a daughter strand on replication of damaged DNA. Protects ubiquitin chains against dissambly by deubiquitinating enzymes thereby promoting protein degradation. This is UV excision repair protein rhp23 (rhp23) from Schizosaccharomyces pombe (strain 972 / ATCC 24843) (Fission yeast).